A 278-amino-acid polypeptide reads, in one-letter code: Casein kinase II subunit beta (278 aa).

2 disordered regions span residues 1 to 22 (MSQE…DSGA) and 78 to 111 (DEEE…RNKS). Position 2 is an N-acetylserine (Ser-2). Ser-2 carries the phosphoserine modification. Residues 78 to 94 (DEEEDEDDVVEEDEVDQ) are compositionally biased toward acidic residues.

Belongs to the casein kinase 2 subunit beta family. As to quaternary structure, tetramer composed of an alpha subunit, an alpha' subunit, one beta subunit and one beta' subunit. Interacts with FACT subunits POB3 and SPT16. interacts with YTA7. In terms of processing, phosphorylated by alpha subunit.

Regulatory subunit of casein kinase II/CK2. As part of the kinase complex regulates the basal catalytic activity of the alpha subunit a constitutively active serine/threonine-protein kinase that phosphorylates a large number of substrates containing acidic residues C-terminal to the phosphorylated serine or threonine. In Saccharomyces cerevisiae (strain ATCC 204508 / S288c) (Baker's yeast), this protein is Casein kinase II subunit beta (CKB1).